The sequence spans 349 residues: Phosphate acetyltransferase (349 aa).

Belongs to the phosphate acetyltransferase and butyryltransferase family.

The protein resides in the cytoplasm. The catalysed reaction is acetyl-CoA + phosphate = acetyl phosphate + CoA. The protein operates within metabolic intermediate biosynthesis; acetyl-CoA biosynthesis; acetyl-CoA from acetate: step 2/2. The polypeptide is Phosphate acetyltransferase (pta) (Rickettsia felis (strain ATCC VR-1525 / URRWXCal2) (Rickettsia azadi)).